A 417-amino-acid chain; its full sequence is MTLSPEKQHVRPRDAADNDPVAVARGLAEKWRATAVERDRAGGSATAEREDLRASGLLSLLVPREYGGWGADWPTAIEVVREIAAADGSLGHLFGYHLTNAPMIELIGSQEQEEHLYTQIAQNNWWTGNASSENNSHVLDWKVRATPTEDGGYVLNGTKHFCSGAKGSDLLFVFGVVQDDSPQQGAIIAAAIPTSRAGVTPNDDWAAIGMRQTDSGSTDFHNVKVEPDEVLGAPNAFVLAFIQSERGSLFAPIAQLIFANVYLGIAHGALDAAREYTRTQARPWTPAGIQQATEDPYTIRSYGEFTIALQGADAAAREAAHLLQTVWDKGDALTPEDRGELMVKVSGVKALATNAALNISSGVFEVIGARGTHPRYGFDRFWRNVRTHSLHDPVSYKIADVGKHTLNGQYPIPGFTS.

Positions N18–N124 are helical N-terminus. Residues Y96, N129–N134, K159–S163, R282, A369–R370, and H391 contribute to the FMN site. Residues W125–A233 form a central beta-barrel N-terminus region. A lid loop region spans residues S131 to K142. The segment at P234–S417 is helical C-terminus.

The protein belongs to the DszC flavin monooxygenase family. In terms of assembly, homotetramer formed by a dimer of dimers; FMN binds between monomers of the homodimer.

The protein localises to the cytoplasm. The catalysed reaction is dibenzothiophene + 2 FMNH2 + 2 O2 = dibenzothiophene 5,5-dioxide + 2 FMN + 2 H2O + 2 H(+). It catalyses the reaction dibenzothiophene + FMNH2 + O2 = dibenzothiophene 5-oxide + FMN + H2O + H(+). It carries out the reaction dibenzothiophene 5-oxide + FMNH2 + O2 = dibenzothiophene 5,5-dioxide + FMN + H2O + H(+). It functions in the pathway sulfur metabolism; dibenzothiophene degradation. DBT degradation completely inhibited by Cu(2+), Mn(2+), p-chloromercuribenzoic acid, 2,2-bipyridyl, 1,10-phenanthroline, and strongly inhibited by Zn(2+), 5,5'- Dithiobis(2-nitrobenzoic acid) and 8-quinolinol. Its function is as follows. Catalyzes the first step of the '4S' desulfurization pathway that removes covalently bound sulfur from dibenzothiophene (DBT) without breaking carbon-carbon bonds. Sulfur dioxygenase which converts DBT to DBT-sulfone (DBTO2 or DBT 5,5-dioxide) in a stepwise manner. Also acts on thioxanthen-9-one and 4,6-dimethyl DBT and 2,8-dimethyl DBT. The protein is Dibenzothiophene monooxygenase of Rhodococcus erythropolis (Arthrobacter picolinophilus).